We begin with the raw amino-acid sequence, 541 residues long: Glucose-6-phosphate isomerase (541 aa).

The active-site Proton donor is Glu-346. Residues His-377 and Lys-506 contribute to the active site.

This sequence belongs to the GPI family.

It is found in the cytoplasm. It catalyses the reaction alpha-D-glucose 6-phosphate = beta-D-fructose 6-phosphate. Its pathway is carbohydrate biosynthesis; gluconeogenesis. It functions in the pathway carbohydrate degradation; glycolysis; D-glyceraldehyde 3-phosphate and glycerone phosphate from D-glucose: step 2/4. In terms of biological role, catalyzes the reversible isomerization of glucose-6-phosphate to fructose-6-phosphate. The sequence is that of Glucose-6-phosphate isomerase from Sinorhizobium medicae (strain WSM419) (Ensifer medicae).